We begin with the raw amino-acid sequence, 89 residues long: uncharacterized protein (89 aa).

Residues 67-86 (VYLSSMYICFILLAIWMTVW) form a helical membrane-spanning segment.

Its subcellular location is the membrane. This is an uncharacterized protein from Bacillus subtilis (strain 168).